A 243-amino-acid chain; its full sequence is tRNA pseudouridine synthase C (243 aa).

D55 is an active-site residue.

Belongs to the pseudouridine synthase RluA family.

It carries out the reaction uridine(65) in tRNA = pseudouridine(65) in tRNA. Responsible for synthesis of pseudouridine from uracil-65 in transfer RNAs. This is tRNA pseudouridine synthase C (truC) from Haemophilus ducreyi (strain 35000HP / ATCC 700724).